Consider the following 354-residue polypeptide: Protein RecA (354 aa).

ATP is bound at residue 65-72 (GPESSGKT).

It belongs to the RecA family.

It is found in the cytoplasm. In terms of biological role, can catalyze the hydrolysis of ATP in the presence of single-stranded DNA, the ATP-dependent uptake of single-stranded DNA by duplex DNA, and the ATP-dependent hybridization of homologous single-stranded DNAs. It interacts with LexA causing its activation and leading to its autocatalytic cleavage. The protein is Protein RecA of Aeromonas hydrophila subsp. hydrophila (strain ATCC 7966 / DSM 30187 / BCRC 13018 / CCUG 14551 / JCM 1027 / KCTC 2358 / NCIMB 9240 / NCTC 8049).